We begin with the raw amino-acid sequence, 419 residues long: MAASSLEQKLSRLEAKLKQENREARRRIDLNLDISPQRPRPTLQLPLANDGGSRSPSSESSPQHPTPPSRPRHMLGLPSTLFTPRSMESIEIDQKLQEIMKQTGYLTIGGQRYQAEINDLENLGEMGSGTCGQVWKMRFRKTGHIIAVKQMRRSGNKEENKRILMDLDVVLKSHDCPYIVQCFGTFITNTDVFIAMELMGTCAEKLKKRMQGPIPERILGKMTVAIVKALYYLKEKHGVIHRDVKPSNILLDERGQIKLCDFGISGRLVDSKAKTRSAGCAAYMAPERIDPPDPTKPDYDIRADVWSLGISLVELATGQFPYKNCKTDFEVLTKVLQEEPPLLPGHMGFSGDFQSFVKDCLTKDHRKRPKYNKLLEHSFIKHYETLEVDVASWFKDVMAKTESPRTSGVLSQHHLPFFR.

Ala-2 is modified (N-acetylalanine). Residues 2–30 adopt a coiled-coil conformation; the sequence is AASSLEQKLSRLEAKLKQENREARRRIDL. Over residues 18–30 the composition is skewed to basic and acidic residues; the sequence is KQENREARRRIDL. Residues 18–77 are disordered; sequence KQENREARRRIDLNLDISPQRPRPTLQLPLANDGGSRSPSSESSPQHPTPPSRPRHMLGL. Over residues 36-63 the composition is skewed to low complexity; sequence PQRPRPTLQLPLANDGGSRSPSSESSPQ. A d Domain region spans residues 37–57; the sequence is QRPRPTLQLPLANDGGSRSPS. Positions 120 to 380 constitute a Protein kinase domain; sequence LENLGEMGSG…YNKLLEHSFI (261 aa). ATP-binding positions include 126–134 and Lys-149; that span reads MGSGTCGQV. The Proton acceptor role is filled by Asp-243. Ser-271 carries the phosphoserine; by MAP3K modification. Thr-275 bears the Phosphothreonine; by MAP3K mark. The interval 377–400 is DVD domain; it reads HSFIKHYETLEVDVASWFKDVMAK. Ser-411 is modified (phosphoserine).

The protein belongs to the protein kinase superfamily. STE Ser/Thr protein kinase family. MAP kinase kinase subfamily. In terms of assembly, interacts with VRK2. Interacts (via its D domain) with its substrates MAPK8/JNK1, MAPK9/JNK2 and MAPK10/JNK3. Interacts (via its DVD domain) with MAP3Ks activators like MAP3K5/ASK1 and MAP3K1/MEKK1. Interacts with MAPK8IP1/JIP1, MAPK8IP2/JIP2 and MAPK8IP3/JIP3 scaffold proteins. Interacts with RASSF7, the interaction promotes phosphorylation. Found in a complex with SH3RF1, RAC1, MAP3K11/MLK3, MAPK8IP1/JIP1 and MAPK8/JNK1. Found in a complex with SH3RF1, RAC2, MAP3K7/TAK1, MAPK8IP1/JIP1, MAPK8/JNK1 and MAPK9/JNK2. It depends on Mg(2+) as a cofactor. In terms of processing, activated by phosphorylation on Ser-271 and Thr-275 by MAP kinase kinase kinases (MAP3Ks).

The protein resides in the nucleus. The protein localises to the cytoplasm. The catalysed reaction is L-seryl-[protein] + ATP = O-phospho-L-seryl-[protein] + ADP + H(+). It catalyses the reaction L-threonyl-[protein] + ATP = O-phospho-L-threonyl-[protein] + ADP + H(+). The enzyme catalyses L-tyrosyl-[protein] + ATP = O-phospho-L-tyrosyl-[protein] + ADP + H(+). With respect to regulation, activated by phosphorylation by specific MAP kinase kinase kinases such as MAP3K1/MEKK1, MAP3K3/MEKK3, MAP3K11/MLK3 and MAP3K12/DLK. Functionally, dual specificity protein kinase which acts as an essential component of the MAP kinase signal transduction pathway. Essential component of the stress-activated protein kinase/c-Jun N-terminal kinase (SAP/JNK) signaling pathway. With MAP2K4/MKK4, is the one of the only known kinase to directly activate the stress-activated protein kinase/c-Jun N-terminal kinases MAPK8/JNK1, MAPK9/JNK2 and MAPK10/JNK3. MAP2K4/MKK4 and MAP2K7/MKK7 both activate the JNKs by phosphorylation, but they differ in their preference for the phosphorylation site in the Thr-Pro-Tyr motif. MAP2K4/MKK4 shows preference for phosphorylation of the Tyr residue and MAP2K7/MKK7 for the Thr residue. The monophosphorylation of JNKs on the Thr residue is sufficient to increase JNK activity indicating that MAP2K7/MKK7 is important to trigger JNK activity, while the additional phosphorylation of the Tyr residue by MAP2K4/MKK4 ensures optimal JNK activation. Has a specific role in JNK signal transduction pathway activated by pro-inflammatory cytokines. The MKK/JNK signaling pathway is also involved in mitochondrial death signaling pathway, including the release cytochrome c, leading to apoptosis. Part of a non-canonical MAPK signaling pathway, composed of the upstream MAP3K12 kinase and downstream MAP kinases MAPK1/ERK2 and MAPK3/ERK1, that enhances the AP-1-mediated transcription of APP in response to APOE. This Rattus norvegicus (Rat) protein is Dual specificity mitogen-activated protein kinase kinase 7.